Here is a 307-residue protein sequence, read N- to C-terminus: F-box protein At5g03100 (307 aa).

An F-box domain is found at 8–54 (VDFISSLPDEILHHILANTPTKLAIRTSVLSKRWKHVWYETPSISIV).

In Arabidopsis thaliana (Mouse-ear cress), this protein is F-box protein At5g03100.